Here is a 386-residue protein sequence, read N- to C-terminus: MDICVRPVWAEIDLDIIANNMKEIRNLVGEKEIIAVVKANAYGHGALDIASTLLENGASRLAVAIITEADELRDAGITAPIMILGYTPINFAENLINNEIEQTVYDVEYAKELSDFALKLGKKAKIHIAIDTGMGRIGFLPNEEGLNKVLEICSLPGVEVVGLFTHFSTSDEKDKTYTYEQFSKLTNFNKALEDNGIHIPLKHASNSGAIMDLPETYLDGVRCGIISYGYYPSEEVKKENLKLKPALTLKTNVAFVKELDEDMYVSYGRTYKTEKKSKIATLPIGYADGYSRLLSGKAKVIIKGQFANVIGRVCMDQCMVDVTHIEDVKIGDEVILLGEENGLKFDANDMAEIMGTINYEILCMISHRVPRIYKKNNEIVKVRNYI.

Lysine 38 acts as the Proton acceptor; specific for D-alanine in catalysis. At lysine 38 the chain carries N6-(pyridoxal phosphate)lysine. Position 136 (arginine 136) interacts with substrate. Catalysis depends on tyrosine 267, which acts as the Proton acceptor; specific for L-alanine. Methionine 315 is a binding site for substrate.

The protein belongs to the alanine racemase family. Requires pyridoxal 5'-phosphate as cofactor.

It catalyses the reaction L-alanine = D-alanine. The protein operates within amino-acid biosynthesis; D-alanine biosynthesis; D-alanine from L-alanine: step 1/1. Functionally, catalyzes the interconversion of L-alanine and D-alanine. May also act on other amino acids. In Clostridium perfringens (strain SM101 / Type A), this protein is Alanine racemase (alr).